Consider the following 202-residue polypeptide: UPF0056 membrane protein PH0214 (202 aa).

The next 6 helical transmembrane spans lie at 5–25 (ILSSALLMLIMIDPSDKILLV), 47–67 (IGFILLLLFAVAGKIILQDIF), 76–96 (VAGGFVLFKIGLEALEGGGMV), 104–124 (ILALAAVPVATPLIAGPAAIT), 135–155 (IIVSIVGTLIAIAITAALMMI), and 174–194 (IIGLFIMAIGAQMMITGAGGI).

This sequence belongs to the UPF0056 (MarC) family.

The protein resides in the cell membrane. The protein is UPF0056 membrane protein PH0214 of Pyrococcus horikoshii (strain ATCC 700860 / DSM 12428 / JCM 9974 / NBRC 100139 / OT-3).